The following is a 157-amino-acid chain: Recombination endonuclease VII (157 aa).

Zn(2+) is bound by residues Cys-23 and Cys-26. Asp-40 lines the Ca(2+) pocket. Zn(2+) contacts are provided by Cys-58 and Cys-61. Asn-62 serves as a coordination point for Ca(2+).

As to quaternary structure, homodimer. Ca(2+) serves as cofactor. The cofactor is Zn(2+).

Functionally, cleaves DNA cruciform and Y-structures as well as heteroduplex loops. Resolves Holliday junctions, recognizes a broad spectrum of DNA substrates ranging from branched DNAs to single base mismatches. The sequence is that of Recombination endonuclease VII (49) from Enterobacteria phage T4 (Bacteriophage T4).